The following is a 304-amino-acid chain: Nod factor export ATP-binding protein I (304 aa).

The 231-residue stretch at 6 to 236 folds into the ABC transporter domain; the sequence is IDLAGVKKSF…HIGCQVIEIF (231 aa). 38–45 provides a ligand contact to ATP; it reads GPNGAGKS.

Belongs to the ABC transporter superfamily. Lipooligosaccharide exporter (TC 3.A.1.102) family. As to quaternary structure, the complex is composed of two ATP-binding proteins (NodI) and two transmembrane proteins (NodJ).

Its subcellular location is the cell inner membrane. In terms of biological role, part of the ABC transporter complex NodIJ involved in the export of the nodulation factors (Nod factors), the bacterial signal molecules that induce symbiosis and subsequent nodulation induction. Nod factors are LCO (lipo-chitin oligosaccharide), a modified beta-1,4-linked N-acetylglucosamine oligosaccharide. This subunit is responsible for energy coupling to the transport system. The sequence is that of Nod factor export ATP-binding protein I from Rhizobium sp. (strain N33).